Reading from the N-terminus, the 273-residue chain is Vitamin B12-binding protein (273 aa).

Residues 1–18 (MMKTLSSLLLLFSVSLQA) form the signal peptide. A Fe/B12 periplasmic-binding domain is found at 23–273 (RVISLAPHAT…EHFASIEQKR (251 aa)). The cysteines at positions 183 and 263 are disulfide-linked.

Belongs to the BtuF family. The complex is composed of two ATP-binding proteins (BtuD), two transmembrane proteins (BtuC) and a solute-binding protein (BtuF).

It localises to the periplasm. Part of the ABC transporter complex BtuCDF involved in vitamin B12 import. Binds vitamin B12 and delivers it to the periplasmic surface of BtuC. The sequence is that of Vitamin B12-binding protein from Vibrio vulnificus (strain YJ016).